The following is a 90-amino-acid chain: ATP-dependent Clp protease adapter protein ClpS (90 aa).

This sequence belongs to the ClpS family. As to quaternary structure, binds to the N-terminal domain of the chaperone ClpA.

In terms of biological role, involved in the modulation of the specificity of the ClpAP-mediated ATP-dependent protein degradation. The chain is ATP-dependent Clp protease adapter protein ClpS from Helicobacter pylori (strain J99 / ATCC 700824) (Campylobacter pylori J99).